Consider the following 291-residue polypeptide: Nitrogenase iron protein (291 aa).

Gly11 to Ser18 contacts ATP. Cys99 is a binding site for [4Fe-4S] cluster. At Arg102 the chain carries ADP-ribosylarginine; by dinitrogenase reductase ADP-ribosyltransferase. Position 133 (Cys133) interacts with [4Fe-4S] cluster.

It belongs to the NifH/BchL/ChlL family. In terms of assembly, homodimer. Requires [4Fe-4S] cluster as cofactor. Post-translationally, the reversible ADP-ribosylation of Arg-102 inactivates the nitrogenase reductase and regulates nitrogenase activity.

It catalyses the reaction N2 + 8 reduced [2Fe-2S]-[ferredoxin] + 16 ATP + 16 H2O = H2 + 8 oxidized [2Fe-2S]-[ferredoxin] + 2 NH4(+) + 16 ADP + 16 phosphate + 6 H(+). Its function is as follows. The key enzymatic reactions in nitrogen fixation are catalyzed by the nitrogenase complex, which has 2 components: the iron protein and the molybdenum-iron protein. This chain is Nitrogenase iron protein, found in Cereibacter sphaeroides (strain ATCC 17023 / DSM 158 / JCM 6121 / CCUG 31486 / LMG 2827 / NBRC 12203 / NCIMB 8253 / ATH 2.4.1.) (Rhodobacter sphaeroides).